Reading from the N-terminus, the 287-residue chain is ADP-dependent (S)-NAD(P)H-hydrate dehydratase (287 aa).

In terms of domain architecture, YjeF C-terminal spans 7–283 (TTALVKKFIP…PEISTVMKPF (277 aa)). (6S)-NADPHX-binding residues include Ala42 and His159. AMP contacts are provided by residues 196 to 200 (KGSTD) and Gly224. Asp225 contacts (6S)-NADPHX.

The protein belongs to the NnrD/CARKD family. In terms of assembly, homotetramer. It depends on Mg(2+) as a cofactor.

It carries out the reaction (6S)-NADHX + ADP = AMP + phosphate + NADH + H(+). It catalyses the reaction (6S)-NADPHX + ADP = AMP + phosphate + NADPH + H(+). Functionally, catalyzes the dehydration of the S-form of NAD(P)HX at the expense of ADP, which is converted to AMP. Together with NAD(P)HX epimerase, which catalyzes the epimerization of the S- and R-forms, the enzyme allows the repair of both epimers of NAD(P)HX, a damaged form of NAD(P)H that is a result of enzymatic or heat-dependent hydration. The chain is ADP-dependent (S)-NAD(P)H-hydrate dehydratase from Nitrosopumilus maritimus (strain SCM1).